A 153-amino-acid chain; its full sequence is Ribonuclease H (153 aa).

An RNase H type-1 domain is found at 4–146; that stretch reads NNEIVEIYTD…CDRLATEQIK (143 aa). The Mg(2+) site is built by aspartate 13, glutamate 51, aspartate 73, and aspartate 138.

The protein belongs to the RNase H family. Monomer. Requires Mg(2+) as cofactor.

The protein resides in the cytoplasm. It catalyses the reaction Endonucleolytic cleavage to 5'-phosphomonoester.. Endonuclease that specifically degrades the RNA of RNA-DNA hybrids. The sequence is that of Ribonuclease H from Caldanaerobacter subterraneus subsp. tengcongensis (strain DSM 15242 / JCM 11007 / NBRC 100824 / MB4) (Thermoanaerobacter tengcongensis).